The primary structure comprises 104 residues: L-rhamnose mutarotase (104 aa).

Residue tyrosine 18 participates in substrate binding. Histidine 22 (proton donor) is an active-site residue. Substrate contacts are provided by residues tyrosine 41 and 76–77; that span reads WW.

This sequence belongs to the rhamnose mutarotase family. As to quaternary structure, homodimer.

The protein localises to the cytoplasm. The enzyme catalyses alpha-L-rhamnose = beta-L-rhamnose. It participates in carbohydrate metabolism; L-rhamnose metabolism. Functionally, involved in the anomeric conversion of L-rhamnose. In Escherichia coli O8 (strain IAI1), this protein is L-rhamnose mutarotase.